A 550-amino-acid chain; its full sequence is Glucose-6-phosphate isomerase (550 aa).

The active-site Proton donor is Glu-356. Residues His-387 and Lys-515 contribute to the active site.

Belongs to the GPI family.

Its subcellular location is the cytoplasm. It catalyses the reaction alpha-D-glucose 6-phosphate = beta-D-fructose 6-phosphate. Its pathway is carbohydrate biosynthesis; gluconeogenesis. The protein operates within carbohydrate degradation; glycolysis; D-glyceraldehyde 3-phosphate and glycerone phosphate from D-glucose: step 2/4. Functionally, catalyzes the reversible isomerization of glucose-6-phosphate to fructose-6-phosphate. This is Glucose-6-phosphate isomerase from Syntrophobacter fumaroxidans (strain DSM 10017 / MPOB).